The sequence spans 144 residues: Bacilliredoxin BLi02323/BL05224 (144 aa).

It belongs to the bacilliredoxin family.

This chain is Bacilliredoxin BLi02323/BL05224, found in Bacillus licheniformis (strain ATCC 14580 / DSM 13 / JCM 2505 / CCUG 7422 / NBRC 12200 / NCIMB 9375 / NCTC 10341 / NRRL NRS-1264 / Gibson 46).